The sequence spans 404 residues: uncharacterized protein (404 aa).

Helical transmembrane passes span 16-36, 49-69, 79-99, 110-130, 133-153, 166-186, 221-241, 252-272, 283-303, 307-327, 342-362, and 364-384; these read FAFF…QPLM, AASL…LVFG, PIMG…AFSP, IQGV…GEEI, GSLG…AVFG, WHMA…IFFI, FLIG…IVYV, AFSS…SFIG, ILVM…NNML, ILGI…ASSW, LYLF…GLFW, and GFHW…ALWL.

It belongs to the major facilitator superfamily.

It localises to the cell membrane. This is an uncharacterized protein from Bacillus subtilis (strain 168).